We begin with the raw amino-acid sequence, 368 residues long: Propane 2-monooxygenase, hydroxylase component small subunit (368 aa).

Residues 1–33 (MSAPAQPRERSFPSIEFTDAEADAREFPSSRSR) are disordered.

This sequence belongs to the TmoE/XamoE family. In terms of assembly, the propane 2-monooxygenase multicomponent enzyme system is composed of an electron transfer component and a monooxygenase component interacting with the effector protein PrmD. The electron transfer component is composed of a reductase (PrmB), and the monooxygenase component is formed by a large subunit (PrmA) and a small subunit (PrmC). Probably requires the presence of the chaperonin-like protein PrmG to ensure a productive folding, resulting of a soluble PrmC, which leads to the active form of PrmABCD.

It catalyses the reaction propane + NADH + O2 + H(+) = propan-2-ol + NAD(+) + H2O. The enzyme catalyses phenol + NADH + O2 + H(+) = hydroquinone + NAD(+) + H2O. Functionally, component of the propane 2-monooxygenase multicomponent enzyme system which is involved in the degradation of propane via the O2-dependent hydroxylation of propane. Under acetone induction, also able to catalyze the oxidation of phenol to yield hydroquinone. This Gordonia sp. (strain TY-5) protein is Propane 2-monooxygenase, hydroxylase component small subunit.